We begin with the raw amino-acid sequence, 244 residues long: 15,16-dihydrobiliverdin:ferredoxin oxidoreductase (244 aa).

Belongs to the HY2 family.

The enzyme catalyses 15,16-dihydrobiliverdin + oxidized 2[4Fe-4S]-[ferredoxin] = biliverdin IXalpha + reduced 2[4Fe-4S]-[ferredoxin] + 2 H(+). Its function is as follows. Catalyzes the two-electron reduction of biliverdin IX-alpha at the C15 methine bridge. This is 15,16-dihydrobiliverdin:ferredoxin oxidoreductase (pebA) from Nostoc punctiforme (strain ATCC 29133 / PCC 73102).